The chain runs to 369 residues: Serpentine receptor class epsilon-2 (369 aa).

The Extracellular portion of the chain corresponds to 1-20 (MLIQYHKISNNDPNRIQLLS). Residues 21–41 (MIFCEIILLIFELFEFAAIIF) form a helical membrane-spanning segment. Topologically, residues 42-55 (NMSRYQFHFNLKVV) are cytoplasmic. A helical membrane pass occupies residues 56-76 (VGYAIFAYWFDIIARITIAFF). Residues 77–118 (EIGLFNLDDQTIAVETEKLPWNYKNMFFMLLFCCSTYRVYFM) lie on the Extracellular side of the membrane. A helical membrane pass occupies residues 119-139 (FLICSVTLLLAVERFLATIWV). Topologically, residues 140–148 (STYESVQHK) are cytoplasmic. The helical transmembrane segment at 149–169 (WVSIVLTSTNSIAGIFGSLLF) threads the bilayer. At 170–178 (HYELIFDTA) the chain is on the extracellular side. The chain crosses the membrane as a helical span at residues 179–199 (VWCSLGLCFNFVSIFLYVILF). Residues 200 to 234 (NSNKSKIELCQTREITQSYTLSLRFQLNENLKIMN) lie on the Cytoplasmic side of the membrane. The chain crosses the membrane as a helical span at residues 235-255 (WIKNSILVVTCFNTLLAGFLI). At 256–274 (ASNNEYLKNDYPVLVKCCH) the chain is on the extracellular side. The chain crosses the membrane as a helical span at residues 275-295 (TFLNLGIAIYAQVVFFVAILA). Residues 296-369 (DRHFRTYFLR…VAKKKRFWRV (74 aa)) lie on the Cytoplasmic side of the membrane.

This sequence belongs to the nematode receptor-like protein sre family.

Its subcellular location is the cell membrane. This chain is Serpentine receptor class epsilon-2 (sre-2), found in Caenorhabditis elegans.